We begin with the raw amino-acid sequence, 290 residues long: MTMVKLEQIFWHVWINGDLVPYQFARIHVLTHSLHYSGSVFEGERAYNGKVFKLKEHTARLIKSAEALGLKVPYNVDEIIKAHECVIKQNNIKDAYIRPLIWCGDESLNITNQYLSTNLLIAGIPSMPRSFEKGINLHVSRWRKAMPDSTPVQSKSAAQYNMAITSKKEAKALGYEDALLLDYEGYIAECTTTNIFFVKDKILYTPIADRFLNGITRQTIIEIAKDLGLEVKEERLKLEQIEDFTGCFVTGTAIEVQNIDSIDLGNKKIIFDDHKIADRLKEEYRRVVRE.

Lysine 155 carries the N6-(pyridoxal phosphate)lysine modification.

The protein belongs to the class-IV pyridoxal-phosphate-dependent aminotransferase family. Pyridoxal 5'-phosphate serves as cofactor.

The enzyme catalyses L-leucine + 2-oxoglutarate = 4-methyl-2-oxopentanoate + L-glutamate. The catalysed reaction is L-isoleucine + 2-oxoglutarate = (S)-3-methyl-2-oxopentanoate + L-glutamate. It catalyses the reaction L-valine + 2-oxoglutarate = 3-methyl-2-oxobutanoate + L-glutamate. The protein operates within amino-acid biosynthesis; L-isoleucine biosynthesis; L-isoleucine from 2-oxobutanoate: step 4/4. Its pathway is amino-acid biosynthesis; L-leucine biosynthesis; L-leucine from 3-methyl-2-oxobutanoate: step 4/4. It participates in amino-acid biosynthesis; L-valine biosynthesis; L-valine from pyruvate: step 4/4. In terms of biological role, acts on leucine, isoleucine and valine. The sequence is that of Probable branched-chain-amino-acid aminotransferase (ilvE) from Rickettsia conorii (strain ATCC VR-613 / Malish 7).